We begin with the raw amino-acid sequence, 59 residues long: Large ribosomal subunit protein uL30 (59 aa).

This sequence belongs to the universal ribosomal protein uL30 family. As to quaternary structure, part of the 50S ribosomal subunit.

This Photorhabdus laumondii subsp. laumondii (strain DSM 15139 / CIP 105565 / TT01) (Photorhabdus luminescens subsp. laumondii) protein is Large ribosomal subunit protein uL30.